A 375-amino-acid chain; its full sequence is Neuropeptide Y receptor type 4 (375 aa).

Over methionine 1–aspartate 39 the chain is Extracellular. 3 N-linked (GlcNAc...) asparagine glycosylation sites follow: asparagine 2, asparagine 19, and asparagine 29. A helical transmembrane segment spans residues leucine 40–leucine 60. Residues cysteine 61 to leucine 78 are Cytoplasmic-facing. A helical transmembrane segment spans residues leucine 79–valine 99. Topologically, residues threonine 100–methionine 116 are extracellular. Cysteines 114 and 201 form a disulfide. A helical membrane pass occupies residues leucine 117 to leucine 137. Residues glutamate 138–glutamine 155 lie on the Cytoplasmic side of the membrane. A helical transmembrane segment spans residues alanine 156 to alanine 176. Topologically, residues asparagine 177 to arginine 211 are extracellular. A glycan (N-linked (GlcNAc...) asparagine) is linked at asparagine 187. Residues leucine 212–valine 232 form a helical membrane-spanning segment. At cysteine 233–arginine 262 the chain is on the cytoplasmic side. The helical transmembrane segment at isoleucine 263 to valine 283 threads the bilayer. At phenylalanine 284–asparagine 301 the chain is on the extracellular side. A helical membrane pass occupies residues leucine 302–tyrosine 322. Topologically, residues glycine 323 to methionine 375 are cytoplasmic. Residue cysteine 340 is the site of S-palmitoyl cysteine attachment.

It belongs to the G-protein coupled receptor 1 family. In terms of tissue distribution, detected in colon and brain.

The protein resides in the cell membrane. In terms of biological role, g protein-coupled receptor for PPY/pancreatic polypeptide/PP that is negatively coupled to cAMP. Has much lower affinity for the NPY/neuropeptide Y and PYY/peptide YY. This chain is Neuropeptide Y receptor type 4 (Npy4r), found in Rattus norvegicus (Rat).